The sequence spans 493 residues: NAD(P)H-quinone oxidoreductase chain 4, chloroplastic (493 aa).

The next 14 helical transmembrane spans lie at 4-24 (FPWLSIIILFPLFAAFFIPLL), 34-54 (WYTLGICLLDFLVMSYIFGYY), 87-107 (MGLILLTGLVTTLAVLAAWPI), 111-131 (PKLFYFLMLVMYSGQIGLFTS), 134-154 (LFLFFLMWELELIPIYLLISL), 167-187 (FIFYTAIGSLFLFIATFTVCF), 212-232 (ILYLGFGFAYAVKLPIIPFHT), 242-262 (HYSTCMLLAGILLKMGGYGWI), 276-296 (FAPWLVILGTVQIIYAASVCL), 313-333 (MGFVLIGICSFTNIGLSGAIC), 334-354 (QMISHGLIGASLFFLAGTTYD), 385-405 (SLALPTMSGFVAEMMIFLGII), 417-437 (FIILFQALGVILTPIYLLSML), and 462-482 (VFIIVSLFIPVIIIGLYPNIL).

This sequence belongs to the complex I subunit 4 family.

It is found in the plastid. The protein localises to the chloroplast thylakoid membrane. The catalysed reaction is a plastoquinone + NADH + (n+1) H(+)(in) = a plastoquinol + NAD(+) + n H(+)(out). It catalyses the reaction a plastoquinone + NADPH + (n+1) H(+)(in) = a plastoquinol + NADP(+) + n H(+)(out). The chain is NAD(P)H-quinone oxidoreductase chain 4, chloroplastic from Chara vulgaris (Common stonewort).